Consider the following 287-residue polypeptide: Prepilin leader peptidase/N-methyltransferase (287 aa).

The helical transmembrane segment at 12–32 threads the bilayer; the sequence is FMYLVVGLFSLAVGSLLNVII. Zn(2+)-binding residues include Cys-71, Cys-74, Cys-96, and Cys-99. The next 5 helical transmembrane spans lie at 127–147, 158–178, 182–202, 215–235, and 259–279; these read FTIQ…LVFI, LTLG…FVSL, VLSC…FYLM, LFAA…LLIS, and PFGP…DSII.

This sequence belongs to the peptidase A24 family. Requires Zn(2+) as cofactor.

It localises to the cell inner membrane. The enzyme catalyses Typically cleaves a -Gly-|-Phe- bond to release an N-terminal, basic peptide of 5-8 residues from type IV prepilin, and then N-methylates the new N-terminal amino group, the methyl donor being S-adenosyl-L-methionine.. Functionally, plays an essential role in type IV pili and type II pseudopili formation by proteolytically removing the leader sequence from substrate proteins and subsequently monomethylating the alpha-amino group of the newly exposed N-terminal phenylalanine. In Legionella pneumophila, this protein is Prepilin leader peptidase/N-methyltransferase (pilD).